Reading from the N-terminus, the 765-residue chain is Zinc transporter ZIP6 (765 aa).

An N-terminal signal peptide occupies residues methionine 1–proline 20. The Extracellular portion of the chain corresponds to leucine 21–tryptophan 335. Asparagine 68 is a glycosylation site (N-linked (GlcNAc...) asparagine). Composition is skewed to basic and acidic residues over residues aspartate 96–histidine 135 and arginine 174–lysine 186. Disordered regions lie at residues aspartate 96 to serine 196 and valine 209 to arginine 257. The span at glutamate 187 to serine 196 shows a compositional bias: low complexity. A compositionally biased stretch (polar residues) spans valine 224–threonine 233. Basic residues predominate over residues valine 238–lysine 247. Basic and acidic residues predominate over residues lysine 248–arginine 257. Residues asparagine 250, asparagine 275, and asparagine 292 are each glycosylated (N-linked (GlcNAc...) asparagine). Residues leucine 336–valine 356 form a helical membrane-spanning segment. Over proline 357–lysine 365 the chain is Cytoplasmic. The chain crosses the membrane as a helical span at residues phenylalanine 366–histidine 386. Over leucine 387–lysine 433 the chain is Extracellular. A helical membrane pass occupies residues glycine 434 to isoleucine 454. The Cytoplasmic portion of the chain corresponds to lysine 455–alanine 667. Residues lysine 458–proline 519 are disordered. The stretch at glutamate 475–aspartate 495 forms a coiled coil. Phosphoserine is present on residues serine 481 and serine 488. Over residues asparagine 490–serine 508 the composition is skewed to basic and acidic residues. Residues glutamine 509–proline 519 are compositionally biased toward polar residues. Residues valine 668–isoleucine 688 form a helical membrane-spanning segment. Over glycine 689–serine 696 the chain is Extracellular. Residue asparagine 694 is glycosylated (N-linked (GlcNAc...) asparagine). A helical transmembrane segment spans residues methionine 697 to proline 717. The Cytoplasmic segment spans residues glutamate 718–tyrosine 734. The chain crosses the membrane as a helical span at residues phenylalanine 735 to phenylalanine 755. At glutamate 756–phenylalanine 765 the chain is on the extracellular side.

It belongs to the ZIP transporter (TC 2.A.5) family. As to quaternary structure, interacts with SLC39A10; which triggers cells to undergo EMT and mitosis. Found in a complex with SLC39A6, SLC39A10 and with the 'Ser-727' phosphorylated form of STAT3 throughout mitosis. Found in a complex with SLC39A6, SLC39A10 and with NCAM1; this complex controls NCAM1 phosphorylation and integration into focal adhesion complexes during epithelial-to-mesenchymal transition (EMT). Found in a complex with SLC39A6, SLC39A10 and with GSK3B that controls NCAM1 phosphorylation. Post-translationally, cleaved on the N-terminus before locating to the plasma membrane. In terms of processing, N-glycosylated. Phosphorylated by ZAP70 in response to TCR stimulation leading to its activation. As to expression, highly expressed in the brain and testis. In the brain strongly expressed in the CA1 and CA3 regions, Purkinje cells in cerebellum and dentate gyrus in hippocampus. In testis found in spermatids or mature sperms in the central areas of seminiferous tubules.

It localises to the cell membrane. It is found in the cell projection. The protein resides in the lamellipodium membrane. Its subcellular location is the membrane raft. The protein localises to the apical cell membrane. The enzyme catalyses Zn(2+)(in) = Zn(2+)(out). Zinc-influx transporter which plays a role in zinc homeostasis and in the induction of epithelial-to-mesenchymal transition (EMT). When associated with SLC39A10, the heterodimer formed by SLC39A10 and SLC39A6 mediates cellular zinc uptake to trigger cells to undergo epithelial- to-mesenchymal transition (EMT). The SLC39A10-SLC39A6 heterodimer also controls NCAM1 phosphorylation and its integration into focal adhesion complexes during EMT. Zinc influx inactivates GSK3B, enabling unphosphorylated SNAI1 in the nucleus to down-regulate adherence genes such as E-cadherin, causing loss of cell adherence. In addition, the SLC39A10-SLC39A6 heterodimer plays an essentiel role in initiating mitosis by importing zinc into cells to initiate a pathway resulting in the onset of mitosis. Participates in the T-cell receptor signaling regulation by mediating cellular zinc uptake into activated lymphocytes. Regulates the zinc influx necessary for proper meiotic progression to metaphase II (MII) that allows the oocyte-to-egg transition. This chain is Zinc transporter ZIP6, found in Mus musculus (Mouse).